The primary structure comprises 761 residues: Protein PHTF1 (761 aa).

One can recognise a PHTF domain in the interval 6-150 (RDAISWYQKK…VHCQIVSTQI (145 aa)). 3 helical membrane passes run 77–97 (GLVR…VTSL), 99–119 (IFVW…LYLL), and 121–141 (PIVS…MGTV). Residues 152–184 (RPSGNNGNRRRRKLRKTVNGDGSRDNGNNSPDK) are disordered. Low complexity predominate over residues 170–181 (NGDGSRDNGNNS). N-linked (GlcNAc...) asparagine glycosylation is found at N179 and N224. A phosphoserine mark is found at S272, S276, S277, S333, and S335. The disordered stretch occupies residues 345 to 414 (VFSQGSRSGM…NTIHSGTKRD (70 aa)). Residues 347–363 (SQGSRSGMSGGSRSLNL) are compositionally biased toward low complexity. N-linked (GlcNAc...) asparagine glycosylation is present at N362. Over residues 364 to 375 (SRRDSESTRHDS) the composition is skewed to basic and acidic residues. N430 carries an N-linked (GlcNAc...) asparagine glycan. 4 helical membrane passes run 472–492 (GVGY…FPFL), 514–534 (TLFC…INFI), 610–630 (VVVS…CAQV), and 644–664 (WEFL…ASLG). N673 and N732 each carry an N-linked (GlcNAc...) asparagine glycan. Residues 736-756 (VVILSAVSGVISDLLGFNIRL) traverse the membrane as a helical segment.

As to quaternary structure, interacts with FEM1B. Widely expressed with highest levels in testis.

Its subcellular location is the endoplasmic reticulum membrane. The protein localises to the golgi apparatus. It localises to the cis-Golgi network membrane. The sequence is that of Protein PHTF1 from Mus musculus (Mouse).